A 370-amino-acid chain; its full sequence is Putrescine-binding periplasmic protein PotF (370 aa).

The signal sequence occupies residues 1–26; the sequence is MTALNKKWLSGLVAGALMAVSVGTLA. Position 38 (Ser-38) interacts with putrescine. Cysteines 175 and 239 form a disulfide. The putrescine site is built by Asp-247 and Asp-278.

It belongs to the bacterial solute-binding protein PotD/PotF family. The complex is composed of two ATP-binding proteins (PotG), two transmembrane proteins (PotH and PotI) and a solute-binding protein (PotF).

The protein localises to the periplasm. With respect to regulation, transport is feedback inhibited by intracellular polyamines. In terms of biological role, part of the ABC transporter complex PotFGHI involved in putrescine uptake. Binds putrescine. Imports putrescine for maintenance of the optimal concentration of polyamines necessary for cell growth in the presence of glucose. This chain is Putrescine-binding periplasmic protein PotF, found in Escherichia coli (strain K12).